Consider the following 227-residue polypeptide: Prolactin (227 aa).

Residues 1 to 28 (MNIKGSPWKGSLLLLLVSNLLLCQNVAP) form the signal peptide. A disulfide bond links cysteine 32 and cysteine 39. Serine 54 bears the Phosphoserine mark. Asparagine 59 carries an N-linked (GlcNAc...) asparagine glycan. 2 positions are modified to phosphoserine: serine 62 and serine 118. Intrachain disulfides connect cysteine 86–cysteine 202 and cysteine 219–cysteine 227.

It belongs to the somatotropin/prolactin family. As to quaternary structure, interacts with PRLR.

The protein localises to the secreted. Its function is as follows. Prolactin acts primarily on the mammary gland by promoting lactation. The protein is Prolactin (PRL) of Macaca mulatta (Rhesus macaque).